The primary structure comprises 1220 residues: Protein patched homolog 1 (1220 aa).

Residues 1-27 (MASDPRDPGPAGGVFGDLPPSYTRSPP) form a disordered region. Residues 1-84 (MASDPRDPGP…GCHIQRHCGK (84 aa)) are Cytoplasmic-facing. A helical membrane pass occupies residues 85–105 (VLFIGLLVFGALSVGLRVAAI). Residues 106 to 419 (ETDIEKLWVE…LNDIMKSFSD (314 aa)) lie on the Extracellular side of the membrane. Asn397 is a glycosylation site (N-linked (GlcNAc...) asparagine). Residues 420–440 (VSVIRVAGGYLLMLAYACVTM) form a helical membrane-spanning segment. Residues 421–579 (SVIRVAGGYL…LLIFPAILSL (159 aa)) form the SSD domain. Residues 441-449 (LRWDCAKSQ) are Cytoplasmic-facing. Residues 450–470 (GAVGLAGVLLVALSVAAGLGL) traverse the membrane as a helical segment. Over 471-484 (CSLLGLSFNAATTQ) the chain is Extracellular. A helical transmembrane segment spans residues 485–505 (VLPSLALGIGVDDMFLLGHSF). Over 506-528 (TETRSNIPFKERTGDCLRRTGTS) the chain is Cytoplasmic. A helical transmembrane segment spans residues 529-549 (VALTSVNNMIAFFMAALVPIP). Topologically, residues 550–558 (ALRAFSLQA) are extracellular. The chain crosses the membrane as a helical span at residues 559 to 579 (AVVVVFNFAMALLIFPAILSL). Residues 580-739 (DLHRREDKRL…APLLLKPETK (160 aa)) are Cytoplasmic-facing. Residues 740 to 760 (TVVVVVFVALLSLSLYGTTMV) traverse the membrane as a helical segment. Residues 761-1016 (HDGLYLTDIV…WEQYIGLRHW (256 aa)) lie on the Extracellular side of the membrane. Asn865 and Asn888 each carry an N-linked (GlcNAc...) asparagine glycan. The helical transmembrane segment at 1017-1037 (FLLSISVVLACTFLVCAILLL) threads the bilayer. Residues 1038–1044 (NPWTAGV) lie on the Cytoplasmic side of the membrane. Residues 1045-1065 (IVFILPMMTVELFGIMGLIGI) form a helical membrane-spanning segment. Residues 1066-1072 (KLSAIPV) lie on the Extracellular side of the membrane. Residues 1073-1093 (VILIASVGIGVEFTVHIALGF) form a helical membrane-spanning segment. At 1094–1110 (LTAIGDRNTRSAVAMEH) the chain is on the cytoplasmic side. A helical membrane pass occupies residues 1111–1131 (MFAPVIDGAISTLLGVLMLAG). The Extracellular segment spans residues 1132–1143 (SEFDFIMRYFFA). A helical transmembrane segment spans residues 1144–1164 (VLAILTLLGILNGLVLLPVLL). The Cytoplasmic portion of the chain corresponds to 1165 to 1220 (SLMGPPAEVVPANNANHLQSPSPEPMPPPMNHHGYYAGHIPKASHQAFSETSDSEY).

Belongs to the patched family. Post-translationally, glycosylation is necessary for SHH binding. Detected in embryonic presomitic mesoderm, neuroectoderm, tissue surrounding the notochord, ventral neural tube.

Its subcellular location is the membrane. Functionally, acts as a receptor for sonic hedgehog (SHH), indian hedgehog (IHH) and desert hedgehog (DHH). Associates with the smoothened protein (SMO) to transduce the hedgehog's proteins signal. This Danio rerio (Zebrafish) protein is Protein patched homolog 1 (ptch1).